Here is a 394-residue protein sequence, read N- to C-terminus: Elongation factor Tu (394 aa).

Residues lysine 10–valine 204 enclose the tr-type G domain. Residues glycine 19–threonine 26 are G1. Glycine 19–threonine 26 provides a ligand contact to GTP. Residue threonine 26 coordinates Mg(2+). A G2 region spans residues glycine 60–asparagine 64. The interval aspartate 81–glycine 84 is G3. Residues aspartate 81–histidine 85 and asparagine 136–aspartate 139 each bind GTP. Positions asparagine 136–aspartate 139 are G4. Residues serine 174–leucine 176 form a G5 region.

Belongs to the TRAFAC class translation factor GTPase superfamily. Classic translation factor GTPase family. EF-Tu/EF-1A subfamily. As to quaternary structure, monomer.

It localises to the cytoplasm. It catalyses the reaction GTP + H2O = GDP + phosphate + H(+). Functionally, GTP hydrolase that promotes the GTP-dependent binding of aminoacyl-tRNA to the A-site of ribosomes during protein biosynthesis. The sequence is that of Elongation factor Tu from Buchnera aphidicola subsp. Cinara cedri (strain Cc).